Here is a 416-residue protein sequence, read N- to C-terminus: Phosphoglycerate kinase (416 aa).

Substrate-binding positions include 24-26 (DLN), R40, 63-66 (HLGR), R126, and R166. Residues K216, G304, E335, and 364–367 (GGDS) each bind ATP.

This sequence belongs to the phosphoglycerate kinase family. Monomer.

It is found in the cytoplasm. The catalysed reaction is (2R)-3-phosphoglycerate + ATP = (2R)-3-phospho-glyceroyl phosphate + ADP. It functions in the pathway carbohydrate degradation; glycolysis; pyruvate from D-glyceraldehyde 3-phosphate: step 2/5. The polypeptide is Phosphoglycerate kinase (Mycobacterium leprae (strain Br4923)).